A 236-amino-acid chain; its full sequence is Peptidase E (236 aa).

Active-site charge relay system residues include Ser122, Asp137, and His159.

It belongs to the peptidase S51 family.

It is found in the cytoplasm. The enzyme catalyses Dipeptidase E catalyzes the hydrolysis of dipeptides Asp-|-Xaa. It does not act on peptides with N-terminal Glu, Asn or Gln, nor does it cleave isoaspartyl peptides.. Functionally, hydrolyzes dipeptides containing N-terminal aspartate residues. May play a role in allowing the cell to use peptide aspartate to spare carbon otherwise required for the synthesis of the aspartate family of amino acids. This chain is Peptidase E, found in Shewanella sp. (strain MR-4).